Consider the following 426-residue polypeptide: Serine--tRNA ligase (426 aa).

233–235 (TAE) is a binding site for L-serine. Residue 264-266 (RRE) participates in ATP binding. Residue Glu-287 coordinates L-serine. Residue 351–354 (EISS) participates in ATP binding. Ser-386 contributes to the L-serine binding site.

Belongs to the class-II aminoacyl-tRNA synthetase family. Type-1 seryl-tRNA synthetase subfamily. Homodimer. The tRNA molecule binds across the dimer.

It localises to the cytoplasm. It catalyses the reaction tRNA(Ser) + L-serine + ATP = L-seryl-tRNA(Ser) + AMP + diphosphate + H(+). It carries out the reaction tRNA(Sec) + L-serine + ATP = L-seryl-tRNA(Sec) + AMP + diphosphate + H(+). Its pathway is aminoacyl-tRNA biosynthesis; selenocysteinyl-tRNA(Sec) biosynthesis; L-seryl-tRNA(Sec) from L-serine and tRNA(Sec): step 1/1. Catalyzes the attachment of serine to tRNA(Ser). Is also able to aminoacylate tRNA(Sec) with serine, to form the misacylated tRNA L-seryl-tRNA(Sec), which will be further converted into selenocysteinyl-tRNA(Sec). This chain is Serine--tRNA ligase, found in Prochlorococcus marinus (strain NATL1A).